Reading from the N-terminus, the 857-residue chain is Autoinducer 2 sensor kinase/phosphatase LuxQ (857 aa).

Transmembrane regions (helical) follow at residues isoleucine 20–serine 40 and leucine 283–isoleucine 303. Residues lysine 490–lysine 712 enclose the Histidine kinase domain. Histidine 493 is subject to Phosphohistidine; by autocatalysis. Residues lysine 735 to lysine 850 form the Response regulatory domain. Aspartate 784 is modified (4-aspartylphosphate).

Binds the complex formed by the autoinducer and LuxP.

The protein localises to the cell inner membrane. The catalysed reaction is ATP + protein L-histidine = ADP + protein N-phospho-L-histidine.. At low cell density, in absence of autoinducer has a kinase activity, and autophosphorylates on a histidine residue. The phosphoryl group is then transferred to an aspartate residue in the response regulator domain. The phosphoryl group is transferred to LuxU, and ultimately to LuxO. At high cell density, in the presence of autoinducer, the kinase activity is inactivated, and the response regulator domain has a phosphatase activity. This chain is Autoinducer 2 sensor kinase/phosphatase LuxQ (luxQ), found in Vibrio vulnificus (strain YJ016).